We begin with the raw amino-acid sequence, 359 residues long: Spore germination protein GerQC (359 aa).

The N-terminal stretch at 1–16 is a signal peptide; sequence MKRWILFLILSVFLIG. Residue cysteine 17 is the site of N-palmitoyl cysteine attachment. The S-diacylglycerol cysteine moiety is linked to residue cysteine 17.

It belongs to the GerABKC lipoprotein family.

It localises to the membrane. Functionally, required for the germination response to inosine. Has no role in L-alanine germination. This is Spore germination protein GerQC (gerQC) from Bacillus cereus.